A 274-amino-acid polypeptide reads, in one-letter code: CDC48-associated ubiquitin-like/zinc finger protein 1 (274 aa).

The segment at 12-58 (LDVGKHCAYCRQLDFLPFHCSFCNEDFCSNHRLKEDHHCRWLLEHEE) adopts an AN1-type zinc-finger fold. Residues Cys-18, Cys-21, Cys-31, Cys-34, Cys-39, His-42, His-48, and Cys-50 each coordinate Zn(2+). Positions 170–266 (NRIYIWCYLV…KDLDTLYLVH (97 aa)) are ubiquitin-like. At Ser-273 the chain carries Phosphoserine.

Interacts (via its ubiquitin-like domain) with CDC48 (via N-terminus). Associates with the 26S proteasome. Specifically interacts with the regulatory particle (RP) subunit RPN2. Exposure to arsenite, a known inducer of protein misfolding resulting in accumulation of polyubiquitinated conjugates, enhances the association with the proteoasome. Binds to ubiquitinated proteins conjugated to a 4 or more molecule ubiquitin chain. Binding to ubiquitinated proteins is zinc-dependent.

It localises to the cytoplasm. The protein localises to the nucleus. Its function is as follows. Promotes efficient arsenite-induced clearance of stress granules (SGs). May have a role in the ubiquitin-proteasome system (UPS) protecting cells from metalloid-induced proteotoxicity. This is CDC48-associated ubiquitin-like/zinc finger protein 1 from Saccharomyces cerevisiae (strain ATCC 204508 / S288c) (Baker's yeast).